The chain runs to 164 residues: MGDLPGLVRLSIALRIQPNDGPVFYKVDGQRFGQNRTIKLLTGSSYKVEVKIKPSTLQVENISIGGVLVPLELKSKEPDGDRVVYTGTYDTEGVTPTKSGERQPIQITMPFTDIGTFETVWQVKFYNYHKRDHCQWGSPFSVIEYECKPNETRSLMWVNKESFL.

This sequence belongs to the CNRIP family. In terms of assembly, interacts with the cannabinoid receptor CNR1 (via C-terminus). Does not interact with cannabinoid receptor CNR2.

Its function is as follows. Suppresses cannabinoid receptor CNR1-mediated tonic inhibition of voltage-gated calcium channels. In terms of biological role, does not suppress cannabinoid receptor CNR1-mediated tonic inhibition of voltage-gated calcium channels. This Homo sapiens (Human) protein is CB1 cannabinoid receptor-interacting protein 1 (CNRIP1).